A 624-amino-acid chain; its full sequence is tRNA uridine 5-carboxymethylaminomethyl modification enzyme MnmG (624 aa).

FAD-binding positions include 13-18 (GGGHAG), V125, and S180. 273-287 (GPRYCPSIEDKIVRF) contacts NAD(+). Q370 lines the FAD pocket.

This sequence belongs to the MnmG family. Homodimer. Heterotetramer of two MnmE and two MnmG subunits. FAD serves as cofactor.

It localises to the cytoplasm. In terms of biological role, NAD-binding protein involved in the addition of a carboxymethylaminomethyl (cmnm) group at the wobble position (U34) of certain tRNAs, forming tRNA-cmnm(5)s(2)U34. This chain is tRNA uridine 5-carboxymethylaminomethyl modification enzyme MnmG, found in Legionella pneumophila (strain Lens).